Consider the following 173-residue polypeptide: MPRTQRNDNFIDKSFTVMADIILKILPTNNRSKEAFAYYRDGMSAQADGEYSEALENYEEALRLEDDPNDRSYILYNMGLIYASNGDHHKALELYHEAIDLNPRMPQALNNIAVVYHYQGEKAKQSGNEDESEALFDKAAEYWKQAIRIAPNNYIEAQNWLKTTGRSEMDVFF.

TPR repeat units lie at residues 35–68 (AFAYYRDGMSAQADGEYSEALENYEEALRLEDDP), 72–105 (SYILYNMGLIYASNGDHHKALELYHEAIDLNPRM), and 120–153 (GEKAKQSGNEDESEALFDKAAEYWKQAIRIAPNN).

This sequence belongs to the Ycf3 family.

Its subcellular location is the cellular thylakoid membrane. In terms of biological role, essential for the assembly of the photosystem I (PSI) complex. May act as a chaperone-like factor to guide the assembly of the PSI subunits. This is Photosystem I assembly protein Ycf3 from Picosynechococcus sp. (strain ATCC 27264 / PCC 7002 / PR-6) (Agmenellum quadruplicatum).